The primary structure comprises 367 residues: DNA replication and repair protein RecF (367 aa).

30–37 (GANGSGKT) contributes to the ATP binding site.

The protein belongs to the RecF family.

It localises to the cytoplasm. In terms of biological role, the RecF protein is involved in DNA metabolism; it is required for DNA replication and normal SOS inducibility. RecF binds preferentially to single-stranded, linear DNA. It also seems to bind ATP. This chain is DNA replication and repair protein RecF, found in Pseudomonas putida (strain W619).